The sequence spans 369 residues: Phosphate acyltransferase (369 aa).

It belongs to the PlsX family. In terms of assembly, homodimer. Probably interacts with PlsY.

The protein localises to the cytoplasm. The catalysed reaction is a fatty acyl-[ACP] + phosphate = an acyl phosphate + holo-[ACP]. The protein operates within lipid metabolism; phospholipid metabolism. Its function is as follows. Catalyzes the reversible formation of acyl-phosphate (acyl-PO(4)) from acyl-[acyl-carrier-protein] (acyl-ACP). This enzyme utilizes acyl-ACP as fatty acyl donor, but not acyl-CoA. This chain is Phosphate acyltransferase, found in Gluconobacter oxydans (strain 621H) (Gluconobacter suboxydans).